Consider the following 379-residue polypeptide: PqqA peptide cyclase (379 aa).

In terms of domain architecture, Radical SAM core spans 8–220 (LPAPIGLLAE…IRVVEEARER (213 aa)). The [4Fe-4S] cluster site is built by Cys22, Cys26, and Cys29.

This sequence belongs to the radical SAM superfamily. PqqE family. In terms of assembly, interacts with PqqD. The interaction is necessary for activity of PqqE. It depends on [4Fe-4S] cluster as a cofactor.

It catalyses the reaction [PQQ precursor protein] + S-adenosyl-L-methionine = E-Y cross-linked-[PQQ precursor protein] + 5'-deoxyadenosine + L-methionine + H(+). It participates in cofactor biosynthesis; pyrroloquinoline quinone biosynthesis. Catalyzes the cross-linking of a glutamate residue and a tyrosine residue in the PqqA protein as part of the biosynthesis of pyrroloquinoline quinone (PQQ). The chain is PqqA peptide cyclase from Methylobacterium nodulans (strain LMG 21967 / CNCM I-2342 / ORS 2060).